Here is a 287-residue protein sequence, read N- to C-terminus: Lipoyl synthase (287 aa).

Residues cysteine 34, cysteine 39, cysteine 45, cysteine 60, cysteine 64, cysteine 67, and serine 273 each contribute to the [4Fe-4S] cluster site. In terms of domain architecture, Radical SAM core spans 46–262; the sequence is WNKRHATVMI…KYIAYSKGFL (217 aa).

Belongs to the radical SAM superfamily. Lipoyl synthase family. [4Fe-4S] cluster is required as a cofactor.

It is found in the cytoplasm. The enzyme catalyses [[Fe-S] cluster scaffold protein carrying a second [4Fe-4S](2+) cluster] + N(6)-octanoyl-L-lysyl-[protein] + 2 oxidized [2Fe-2S]-[ferredoxin] + 2 S-adenosyl-L-methionine + 4 H(+) = [[Fe-S] cluster scaffold protein] + N(6)-[(R)-dihydrolipoyl]-L-lysyl-[protein] + 4 Fe(3+) + 2 hydrogen sulfide + 2 5'-deoxyadenosine + 2 L-methionine + 2 reduced [2Fe-2S]-[ferredoxin]. It functions in the pathway protein modification; protein lipoylation via endogenous pathway; protein N(6)-(lipoyl)lysine from octanoyl-[acyl-carrier-protein]: step 2/2. Functionally, catalyzes the radical-mediated insertion of two sulfur atoms into the C-6 and C-8 positions of the octanoyl moiety bound to the lipoyl domains of lipoate-dependent enzymes, thereby converting the octanoylated domains into lipoylated derivatives. The polypeptide is Lipoyl synthase (Wolbachia sp. subsp. Drosophila simulans (strain wRi)).